The primary structure comprises 185 residues: dCTP deaminase (185 aa).

Residues 107-112, 131-133, Gln152, Tyr166, and Gln176 each bind dCTP; these read KSTYAR and TLE. Glu133 acts as the Proton donor/acceptor in catalysis.

The protein belongs to the dCTP deaminase family. In terms of assembly, homotrimer.

The catalysed reaction is dCTP + H2O + H(+) = dUTP + NH4(+). The protein operates within pyrimidine metabolism; dUMP biosynthesis; dUMP from dCTP (dUTP route): step 1/2. Catalyzes the deamination of dCTP to dUTP. In Wolbachia pipientis wMel, this protein is dCTP deaminase.